A 310-amino-acid polypeptide reads, in one-letter code: HPr kinase/phosphorylase 1 (310 aa).

Residues histidine 139 and lysine 160 contribute to the active site. 154 to 161 (GQSGVGKS) contributes to the ATP binding site. Residue serine 161 participates in Mg(2+) binding. Catalysis depends on aspartate 178, which acts as the Proton acceptor; for phosphorylation activity. Proton donor; for dephosphorylation activity. Positions 202–211 (LEIRGLGIIN) are important for the catalytic mechanism of both phosphorylation and dephosphorylation. Glutamate 203 is a Mg(2+) binding site. Arginine 244 is a catalytic residue. The important for the catalytic mechanism of dephosphorylation stretch occupies residues 265-270 (PVRPGR).

The protein belongs to the HPrK/P family. As to quaternary structure, homohexamer. Mg(2+) serves as cofactor.

It carries out the reaction [HPr protein]-L-serine + ATP = [HPr protein]-O-phospho-L-serine + ADP + H(+). The enzyme catalyses [HPr protein]-O-phospho-L-serine + phosphate + H(+) = [HPr protein]-L-serine + diphosphate. Its function is as follows. Catalyzes the ATP- as well as the pyrophosphate-dependent phosphorylation of a specific serine residue in HPr, a phosphocarrier protein of the phosphoenolpyruvate-dependent sugar phosphotransferase system (PTS). HprK/P also catalyzes the pyrophosphate-producing, inorganic phosphate-dependent dephosphorylation (phosphorolysis) of seryl-phosphorylated HPr (P-Ser-HPr). The two antagonistic activities of HprK/P are regulated by several intracellular metabolites, which change their concentration in response to the absence or presence of rapidly metabolisable carbon sources (glucose, fructose, etc.) in the growth medium. Also phosphorylates/dephosphorylates the HPr-like catabolite repression protein crh on a specific serine residue. Therefore, by controlling the phosphorylation state of HPr and crh, HPrK/P is a sensor enzyme that plays a major role in the regulation of carbon metabolism and sugar transport: it mediates carbon catabolite repression (CCR), and regulates PTS-catalyzed carbohydrate uptake and inducer exclusion. The protein is HPr kinase/phosphorylase 1 (hprK1) of Oceanobacillus iheyensis (strain DSM 14371 / CIP 107618 / JCM 11309 / KCTC 3954 / HTE831).